We begin with the raw amino-acid sequence, 92 residues long: MSADSAWYLYLLECTGDSIYTGITTDVARRFAEHLSGKGAKYTRSRKPIRVLGQLRFDTKSEALKAEIEIKRLSSTQKRAFCAQLPATEPAR.

Residues 5–80 form the GIY-YIG domain; it reads SAWYLYLLEC…KRLSSTQKRA (76 aa).

It belongs to the UPF0213 family.

This is UPF0213 protein H16_B0156 from Cupriavidus necator (strain ATCC 17699 / DSM 428 / KCTC 22496 / NCIMB 10442 / H16 / Stanier 337) (Ralstonia eutropha).